Consider the following 180-residue polypeptide: Centromere protein M (180 aa).

It is found in the nucleus. Its subcellular location is the chromosome. The protein resides in the centromere. Probable component of a centromeric complex involved in assembly of kinetochore proteins, mitotic progression and chromosome segregation. The chain is Centromere protein M (cenpm) from Xenopus laevis (African clawed frog).